The chain runs to 244 residues: Cobalt transport protein CbiM (244 aa).

Positions 1 to 27 (MVEGMLKTNFRLLFLLIFLLIPTPVLA) are cleaved as a signal peptide. Helical transmembrane passes span 36–56 (PVKWVIFWDLVTLPFIMVGFI), 65–85 (GPGAKLMLAFAGAFIFVLSAL), 102–122 (LAAILFGPFITTVLGFIVLIF), 134–154 (TLGANTFSMAVAGPLVAYGVY), 168–188 (IFLAAMLGDLVTYIVTSVQLA), and 196–216 (LFLSALKFMGIFALTQIPLAI).

The protein belongs to the CbiM family. In terms of assembly, forms an energy-coupling factor (ECF) transporter complex composed of an ATP-binding protein (A component, CbiO), a transmembrane protein (T component, CbiQ) and 2 possible substrate-capture proteins (S components, CbiM and CbiN) of unknown stoichimetry.

It localises to the cell membrane. It functions in the pathway cofactor biosynthesis; adenosylcobalamin biosynthesis. Functionally, part of the energy-coupling factor (ECF) transporter complex CbiMNOQ involved in cobalt import. The protein is Cobalt transport protein CbiM of Carboxydothermus hydrogenoformans (strain ATCC BAA-161 / DSM 6008 / Z-2901).